Reading from the N-terminus, the 701-residue chain is ER-retained PMA1-suppressing protein 1 (701 aa).

The N-terminal stretch at 1-27 is a signal peptide; that stretch reads MKMNLKRLVVTFFSCITFLLKFTIAAA. The Thioredoxin 1 domain occupies 28–142; that stretch reads EPPEGFPEPL…LIAFARRESM (115 aa). Cys60 and Cys63 form a disulfide bridge. A glycan (N-linked (GlcNAc...) asparagine) is linked at Asn85. Cysteines 200 and 203 form a disulfide. 3 N-linked (GlcNAc...) asparagine glycosylation sites follow: Asn264, Asn299, and Asn370. The Thioredoxin 2 domain occupies 408 to 446; sequence PTFFMFKDGDPISYVFPGYSTTEMRNIDAIMDWVKKYSN. The chain crosses the membrane as a helical span at residues 646–666; sequence IIHGNGMPGYLIVIVLFIAIL.

It belongs to the protein disulfide isomerase family. In terms of assembly, interacts with mutated PMA1-D378N but not wild type PMA1. Interacts with EUG1, KAR2, MPD1 and PDI1.

It localises to the endoplasmic reticulum membrane. The catalysed reaction is Catalyzes the rearrangement of -S-S- bonds in proteins.. In terms of biological role, acts as a membrane-bound chaperone in endoplasmic reticulum quality control. Probably facilitates presentation of substrate to membrane-bound components of the degradation machinery. The chain is ER-retained PMA1-suppressing protein 1 (EPS1) from Saccharomyces cerevisiae (strain ATCC 204508 / S288c) (Baker's yeast).